A 194-amino-acid polypeptide reads, in one-letter code: MSSILIAVIAISALALVFGLILGFASIKFKVESDPIVDQIDSILPQTQCGQCGYPGCKPYAEAIANGDTINKCPPGGQATIEKLADLMGVDIPSSAHDEEKSIKKIAFIHEDMCIGCTKCIQACPVDAIVGGTKALHTVIEAECTGCDLCVAPCPTDCIEMIPVNTTPDNWKWDLNTIPVVNLPADKPTKASEL.

The hydrophobic stretch occupies residues 1–26; the sequence is MSSILIAVIAISALALVFGLILGFAS. The 59-residue stretch at 32 to 90 folds into the 4Fe-4S domain; sequence ESDPIVDQIDSILPQTQCGQCGYPGCKPYAEAIANGDTINKCPPGGQATIEKLADLMGV. The [4Fe-4S] cluster site is built by Cys49, Cys52, Cys57, Cys73, Cys114, Cys117, Cys120, Cys124, Cys144, Cys147, Cys150, and Cys154. 4Fe-4S ferredoxin-type domains lie at 105–134 and 135–164; these read KIAFIHEDMCIGCTKCIQACPVDAIVGGTK and ALHTVIEAECTGCDLCVAPCPTDCIEMIPV.

It belongs to the 4Fe4S bacterial-type ferredoxin family. RnfB subfamily. In terms of assembly, the complex is composed of six subunits: RnfA, RnfB, RnfC, RnfD, RnfE and RnfG. [4Fe-4S] cluster serves as cofactor.

Its subcellular location is the cell inner membrane. In terms of biological role, part of a membrane-bound complex that couples electron transfer with translocation of ions across the membrane. The polypeptide is Ion-translocating oxidoreductase complex subunit B (Aliivibrio salmonicida (strain LFI1238) (Vibrio salmonicida (strain LFI1238))).